The chain runs to 229 residues: Secreted RxLR effector protein PITG_22926 (229 aa).

The first 23 residues, 1 to 23, serve as a signal peptide directing secretion; sequence MRCNHTLCVVAITFLVSWSQTLS. The RxLR-dEER signature appears at 34 to 45; that stretch reads PLVRSVSATEER.

It belongs to the RxLR effector family.

The protein resides in the secreted. It is found in the host nucleus. Functionally, secreted effector that acts as a RNA silencing suppressor, probably by inhibiting the biogenesis of small RNAs in the host plant, to manipulate host immune responses and promote Phytophthora infection. In Phytophthora infestans (strain T30-4) (Potato late blight agent), this protein is Secreted RxLR effector protein PITG_22926.